Consider the following 977-residue polypeptide: Ephrin type-A receptor 1 (977 aa).

The signal sequence occupies residues 1 to 26 (MERRWPLGLALLLLLLCAPLPPGARA). Topologically, residues 27–548 (EEVTLMDTST…PVSRSLTGGE (522 aa)) are extracellular. The Eph LBD domain maps to 28–210 (EVTLMDTSTA…FYQRCAETVH (183 aa)). Fibronectin type-III domains lie at 333–446 (PPSA…MGHA) and 448–539 (SLSG…TSPP). N-linked (GlcNAc...) asparagine glycans are attached at residues Asn415 and Asn479. Residues 549 to 569 (IVAVIFGLLLGIALLIGIYVF) traverse the membrane as a helical segment. The Cytoplasmic portion of the chain corresponds to 570 to 977 (RSRRGQRQRQ…ILCSIQGFKD (408 aa)). 2 positions are modified to phosphotyrosine; by autocatalysis: Tyr600 and Tyr606. Positions 625-885 (LIVDTVIGEG…QLQAHLEQLL (261 aa)) constitute a Protein kinase domain. Residues 631–639 (IGEGEFGEV) and Lys657 each bind ATP. Asp750 acts as the Proton acceptor in catalysis. A Phosphotyrosine; by autocatalysis modification is found at Tyr782. Phosphoserine is present on residues Ser907 and Ser911. The SAM domain occupies 914-977 (IPYRSVSEWL…ILCSIQGFKD (64 aa)). Positions 975 to 977 (FKD) match the PDZ-binding motif.

This sequence belongs to the protein kinase superfamily. Tyr protein kinase family. Ephrin receptor subfamily. Homodimer. Forms a signaling complex with LCK; PTK2B/PYK2 and PI3-kinase upon activation by EFNA1; regulates T-lymphocytes migration. Interacts (via SAM domain) with ILK (via ANK repeats); stimulated by EFNA1 but independent of the kinase activity of EPHA1. Interacts (kinase activity-dependent) with PTK2/FAK1. Phosphorylated. Autophosphorylation is stimulated by its ligand EFNA1. In terms of processing, ubiquitinated. In terms of tissue distribution, preferentially expressed in epithelial cells including skin, kidney, liver and thymus. Expressed in myogenic progenitor cells.

Its subcellular location is the cell membrane. The catalysed reaction is L-tyrosyl-[protein] + ATP = O-phospho-L-tyrosyl-[protein] + ADP + H(+). Receptor tyrosine kinase which binds promiscuously membrane-bound ephrin-A family ligands residing on adjacent cells, leading to contact-dependent bidirectional signaling into neighboring cells. The signaling pathway downstream of the receptor is referred to as forward signaling while the signaling pathway downstream of the ephrin ligand is referred to as reverse signaling. Binds with a low affinity EFNA3 and EFNA4 and with a high affinity to EFNA1 which most probably constitutes its cognate/functional ligand. Upon activation by EFNA1 induces cell attachment to the extracellular matrix inhibiting cell spreading and motility through regulation of ILK and downstream RHOA and RAC. Also plays a role in angiogenesis and regulates cell proliferation. May play a role in apoptosis. The protein is Ephrin type-A receptor 1 (Epha1) of Mus musculus (Mouse).